The sequence spans 183 residues: Akirin-1B (183 aa).

Positions 14–43 (EALMSPQSPKRRRCAPLPGSPATPSPQRCG) are disordered. An SYVS motif motif is present at residues 180 to 183 (SYVS).

It belongs to the akirin family.

Its subcellular location is the nucleus. Functionally, molecular adapter that acts as a bridge between proteins, and which is involved skeletal muscle development. Functions as a signal transducer for MSTN during skeletal muscle regeneration and myogenesis. The sequence is that of Akirin-1B (akirin1-b) from Xenopus laevis (African clawed frog).